A 221-amino-acid chain; its full sequence is MVVLVTRSLLPALFFASRAPFAAATTSARFQRGLATMAAEAFTKHEVIPDVLASNPPSKVVSVKFNSGVEANLGNVLTPTQVKDTPEVKWDAEPGALYTLIKTDPDAPSRKEPTYREWHHWLVVNIPGNDIAKGDTLSEYIGAGPPPKTGLHRYVYLIYKQSGRIEDAEHGRLTNTSGDKRGGWKAADFVAKHKLGAPVFGNLFQAEYDDYVPILNKQLGA.

It belongs to the phosphatidylethanolamine-binding protein family.

This chain is Phosphatidylethanolamine-binding protein homolog F40A3.3, found in Caenorhabditis elegans.